The following is a 1054-amino-acid chain: Disks large-associated protein 2 (1054 aa).

Disordered stretches follow at residues 32–87 and 242–301; these read EPEE…SGSR and SHSL…SDDN. The segment covering 242-255 has biased composition (polar residues); it reads SHSLEGSSKSNANG. Positions 267-281 are enriched in basic residues; sequence HAHHAKHSKRSKSKE. The span at 289 to 299 shows a compositional bias: low complexity; sequence RPGMSSWWSSD. Phosphoserine is present on residues Ser298, Ser304, Ser386, and Ser452. Disordered regions lie at residues 442-464 and 609-666; these read GDEE…ILPE and YKKT…TDSL. The segment covering 628-641 has biased composition (polar residues); that stretch reads VTAQSSTESTQDAY. Ser662, Ser665, Ser668, and Ser715 each carry phosphoserine. The interval 719 to 746 is disordered; sequence QDSEFPEHQPYPRSDVETATDSDTESRG. Thr738 carries the post-translational modification Phosphothreonine. 5 positions are modified to phosphoserine: Ser740, Ser771, Ser806, Ser978, and Ser1007. Composition is skewed to basic and acidic residues over residues 977–987 and 1002–1020; these read ESPERKEERKV and ITRE…EARR. The interval 977 to 1021 is disordered; the sequence is ESPERKEERKVPPPIPKKPPKGKFPITREKSLDLPDRQRQEARRR.

It belongs to the SAPAP family. In terms of assembly, interacts with DLG1 and DLG4/PSD-95. In terms of tissue distribution, expressed in brain and kidney.

Its subcellular location is the cell membrane. The protein localises to the postsynaptic density. The protein resides in the synapse. In terms of biological role, may play a role in the molecular organization of synapses and neuronal cell signaling. Could be an adapter protein linking ion channel to the subsynaptic cytoskeleton. May induce enrichment of PSD-95/SAP90 at the plasma membrane. This is Disks large-associated protein 2 from Homo sapiens (Human).